Here is a 65-residue protein sequence, read N- to C-terminus: Gallinacin-12 (65 aa).

The signal sequence occupies residues 1-19 (MRNLCFVFIFISLLAHGST). 3 disulfide bridges follow: Cys25-Cys54, Cys32-Cys47, and Cys37-Cys55.

This sequence belongs to the beta-defensin family. In terms of tissue distribution, expressed in the large intestine, kidney liver, gall bladder, testis, ovary and male and female reproductive tracts. Expressed in the ovarian stroma and the theca and granulosa layers of the ovarian follicle.

Its subcellular location is the secreted. It is found in the cytoplasmic granule. Functionally, has bactericidal activity. In Gallus gallus (Chicken), this protein is Gallinacin-12 (GAL12).